Here is a 313-residue protein sequence, read N- to C-terminus: Cytochrome f (313 aa).

An N-terminal signal peptide occupies residues 1–31 (MQNMFSFLSNKKIIALFLIIGTIFMPLSSEA). Heme contacts are provided by Tyr32, Cys52, Cys55, and His56. Residues 279–298 (IKWLIAFLILSTLGQVFLVL) form a helical membrane-spanning segment.

The protein belongs to the cytochrome f family. As to quaternary structure, the 4 large subunits of the cytochrome b6-f complex are cytochrome b6, subunit IV (17 kDa polypeptide, petD), cytochrome f and the Rieske protein, while the 4 small subunits are PetG, PetL, PetM and PetN. The complex functions as a dimer. Heme is required as a cofactor.

The protein resides in the plastid. It localises to the chloroplast thylakoid membrane. Functionally, component of the cytochrome b6-f complex, which mediates electron transfer between photosystem II (PSII) and photosystem I (PSI), cyclic electron flow around PSI, and state transitions. The protein is Cytochrome f (petA) of Mesostigma viride (Green alga).